The chain runs to 878 residues: E3 ubiquitin-protein ligase SH3RF3 (878 aa).

Residues 19 to 40 form a disordered region; that stretch reads RGEGEDRQGEQQRGAQARTEED. The RING-type zinc-finger motif lies at 52–93; the sequence is CSVCLERLDTTAKVLPCQHTFCRRCLESIVCSRHELRCPECR. The tract at residues 120 to 145 is disordered; the sequence is PRTGASPGSSPPARPGPGTFSALAGG. SH3 domains lie at 187–246 and 249–312; these read SQLP…CVRP and QALP…LNDS. The interaction with RAC1 stretch occupies residues 364–433; it reads RVDSKKNAKK…TVPTQDSSSA (70 aa). Ser-395 carries the post-translational modification Phosphoserine. The region spanning 458-519 is the SH3 3 domain; the sequence is LPLNVYLALY…PGNYVTPVSR (62 aa). 2 disordered regions span residues 574 to 659 and 688 to 758; these read QHPA…CPRP and PISG…MGPE. Polar residues-rich tracts occupy residues 590 to 609, 618 to 633, 643 to 653, and 690 to 699; these read AQPTASQAGDTTIPTATHAS, ATVSPLRTQTSPSRLP, ASPQHGQQSPA, and SGLSTPSLIN. Residues 703–716 show a composition bias toward basic and acidic residues; sequence KPDDKKNEKKEKKS. The segment covering 741 to 752 has biased composition (polar residues); sequence HDPQSAMDTSLQ. Ser-792 carries the phosphoserine modification. The 60-residue stretch at 819–878 folds into the SH3 4 domain; that stretch reads LPRERYRVVVSYPPQSEAEIELKEGDIVFVHKKHEDGWFKGTLQRNGRTGLFPGSFVESF.

This sequence belongs to the SH3RF family. As to quaternary structure, interacts (via SH3 domain 3) with PAK2. Interacts with RAC1 (GTP-bound form). Post-translationally, autoubiquitinated.

It carries out the reaction S-ubiquitinyl-[E2 ubiquitin-conjugating enzyme]-L-cysteine + [acceptor protein]-L-lysine = [E2 ubiquitin-conjugating enzyme]-L-cysteine + N(6)-ubiquitinyl-[acceptor protein]-L-lysine.. It functions in the pathway protein modification; protein ubiquitination. In terms of biological role, has E3 ubiquitin-protein ligase activity. This is E3 ubiquitin-protein ligase SH3RF3 (Sh3rf3) from Mus musculus (Mouse).